A 390-amino-acid polypeptide reads, in one-letter code: Homoserine O-acetyltransferase (390 aa).

An AB hydrolase-1 domain is found at 55–366; sequence NAILINHAFS…ESDCGHDAFL (312 aa). The active-site Nucleophile is serine 163. Substrate is bound at residue arginine 232. Active-site residues include aspartate 329 and histidine 362. Substrate is bound at residue aspartate 363.

It belongs to the AB hydrolase superfamily. MetX family. Homodimer.

The protein localises to the cytoplasm. It catalyses the reaction L-homoserine + acetyl-CoA = O-acetyl-L-homoserine + CoA. The protein operates within amino-acid biosynthesis; L-methionine biosynthesis via de novo pathway; O-acetyl-L-homoserine from L-homoserine: step 1/1. In terms of biological role, transfers an acetyl group from acetyl-CoA to L-homoserine, forming acetyl-L-homoserine. This Desulfotalea psychrophila (strain LSv54 / DSM 12343) protein is Homoserine O-acetyltransferase.